The primary structure comprises 233 residues: Histone H1-I (233 aa).

2 disordered regions span residues 1 to 55 (MSDS…HPPV) and 115 to 233 (TGAS…KKSK). Residues 17-29 (KAATPAKSPAKSP) are compositionally biased toward low complexity. An H15 domain is found at 51–125 (THPPVSEMVV…GASGSFKMPP (75 aa)). Basic and acidic residues-rich tracts occupy residues 128-137 (KKVDKPEAAP) and 144-155 (PKREIEKKEKKV). Basic residues-rich tracts occupy residues 172–186 (AAKKAVAKPAAKKAA), 199–213 (SPKKAAAKPKAKPTP), and 223–233 (AAAKKPAKKSK).

The protein belongs to the histone H1/H5 family.

It is found in the nucleus. It localises to the chromosome. Histones H1 are necessary for the condensation of nucleosome chains into higher-order structures. The chain is Histone H1-I from Glyptotendipes salinus (Midge).